The sequence spans 80 residues: Metallothionein-like protein BIF98 (80 aa).

The protein belongs to the metallothionein superfamily. Type 15 family.

Functionally, metallothioneins have a high content of cysteine residues that bind various heavy metals. The polypeptide is Metallothionein-like protein BIF98 (Brassica rapa subsp. pekinensis (Chinese cabbage)).